We begin with the raw amino-acid sequence, 259 residues long: 14-3-3-like protein (259 aa).

It belongs to the 14-3-3 family.

This is 14-3-3-like protein from Helianthus annuus (Common sunflower).